Here is a 136-residue protein sequence, read N- to C-terminus: Glycine-rich RNA-binding protein 4, mitochondrial (136 aa).

Residues 1–33 constitute a mitochondrion transit peptide; it reads MAFCNKLSGILRQGVSQSSNGPVTSMLGSLRYM. An RRM domain is found at 35–113; that stretch reads SKLFVGGLSW…RQIRVNLATE (79 aa). The residue at position 43 (Ser-43) is a Phosphoserine. The interval 113 to 136 is disordered; the sequence is ERSSAPRSSFGGGGGYGGGGGGGY. Over residues 122–136 the composition is skewed to gly residues; it reads FGGGGGYGGGGGGGY. The interval 123-135 is glycine-rich (GR) required for cell-to-cell movement; it reads GGGGGYGGGGGGG.

This sequence belongs to the GR-RBP family. As to quaternary structure, binds to small phloem-mobile single-stranded RNAs (ss-sRNA, e.g. small interfering RNA (siRNA) and microRNA (miRNA)) in the phloeme exudate, including viral-derived sRNA (vsiRNA). Abundantly expressed in young plants, root tips, and flowers, but weakly in mature leaves and stems, implying highly expression in actively proliferating organs.

It is found in the mitochondrion. It localises to the secreted. Possibly has a role in RNA transcription or processing during stress. Binds sequence non-specifically to RNAs and DNAs. Mediates cell-to-cell trafficking of RNA interference (RNAi) signals (small RNAs (sRNA), e.g. small interfering RNA (siRNA) and microRNA (miRNA)) which regulate growth and development, as well as responses to environmental inputs, including pathogen attack; can compromise zucchini yellow mosaic virus (ZYMV) and tobacco rattle virus (TRV) infections at the early stage. In Arabidopsis thaliana (Mouse-ear cress), this protein is Glycine-rich RNA-binding protein 4, mitochondrial.